Reading from the N-terminus, the 118-residue chain is UPF0102 protein Dtur_1530 (118 aa).

It belongs to the UPF0102 family.

The sequence is that of UPF0102 protein Dtur_1530 from Dictyoglomus turgidum (strain DSM 6724 / Z-1310).